Reading from the N-terminus, the 243-residue chain is Pyridoxine 5'-phosphate synthase (243 aa).

Residue Asn9 participates in 3-amino-2-oxopropyl phosphate binding. 11–12 contributes to the 1-deoxy-D-xylulose 5-phosphate binding site; that stretch reads DH. Arg20 lines the 3-amino-2-oxopropyl phosphate pocket. His45 serves as the catalytic Proton acceptor. Arg47 and His52 together coordinate 1-deoxy-D-xylulose 5-phosphate. Glu72 serves as the catalytic Proton acceptor. Thr102 lines the 1-deoxy-D-xylulose 5-phosphate pocket. Residue His193 is the Proton donor of the active site. 3-amino-2-oxopropyl phosphate-binding positions include Gly194 and 215-216; that span reads GH.

The protein belongs to the PNP synthase family. In terms of assembly, homooctamer; tetramer of dimers.

Its subcellular location is the cytoplasm. It carries out the reaction 3-amino-2-oxopropyl phosphate + 1-deoxy-D-xylulose 5-phosphate = pyridoxine 5'-phosphate + phosphate + 2 H2O + H(+). It participates in cofactor biosynthesis; pyridoxine 5'-phosphate biosynthesis; pyridoxine 5'-phosphate from D-erythrose 4-phosphate: step 5/5. Its function is as follows. Catalyzes the complicated ring closure reaction between the two acyclic compounds 1-deoxy-D-xylulose-5-phosphate (DXP) and 3-amino-2-oxopropyl phosphate (1-amino-acetone-3-phosphate or AAP) to form pyridoxine 5'-phosphate (PNP) and inorganic phosphate. This is Pyridoxine 5'-phosphate synthase from Salmonella typhimurium (strain LT2 / SGSC1412 / ATCC 700720).